Here is a 564-residue protein sequence, read N- to C-terminus: Pyranose 2-oxidase (564 aa).

The propeptide occupies 1 to 25 (MPIRLSKEKINDLLQRSQGDLTSSQ). A Tele-8alpha-FAD histidine modification is found at His158. Residues Gln392 and His394 each contribute to the substrate site. The Proton acceptor role is filled by His498. Residue Asn541 is part of the active site.

This sequence belongs to the GMC oxidoreductase family. In terms of assembly, homotetramer. The cofactor is FAD.

It carries out the reaction D-glucose + O2 = 2-dehydro-D-glucose + H2O2. Its function is as follows. Catalyzes the oxidation of various aldopyranoses and disaccharides on carbon-2 to the corresponding 2-keto sugars concomitant with the reduction of O(2) to H(2)O(2). The preferred substrate is D-glucose which is converted to 2-dehydro-D-glucose. Acts also on D-xylose, L-sorbose, D-galactose and 1,5-anhydroglucitol, a diagnostic marker of diabetes mellitus. This is Pyranose 2-oxidase (p2ox) from Tricholoma matsutake (Matsutake mushroom).